A 126-amino-acid chain; its full sequence is Glycine cleavage system H protein (126 aa).

The 83-residue stretch at 22 to 104 (TVTIGITEYA…YEKAWMVKVE (83 aa)) folds into the Lipoyl-binding domain. Lys-63 is modified (N6-lipoyllysine).

The protein belongs to the GcvH family. The glycine cleavage system is composed of four proteins: P, T, L and H. (R)-lipoate is required as a cofactor.

The glycine cleavage system catalyzes the degradation of glycine. The H protein shuttles the methylamine group of glycine from the P protein to the T protein. In terms of biological role, is also involved in protein lipoylation via its role as an octanoyl/lipoyl carrier protein intermediate. The sequence is that of Glycine cleavage system H protein from Staphylococcus haemolyticus (strain JCSC1435).